The chain runs to 155 residues: Protein SprT-like (155 aa).

The SprT-like domain maps to 7-145; it reads QQHMEEVSLQ…GSCGGRLKQT (139 aa). His67 contributes to the Zn(2+) binding site. Residue Glu68 is part of the active site. His71 is a binding site for Zn(2+).

Belongs to the SprT family. Zn(2+) is required as a cofactor.

It is found in the cytoplasm. The chain is Protein SprT-like from Listeria innocua serovar 6a (strain ATCC BAA-680 / CLIP 11262).